The sequence spans 500 residues: Proline/betaine transporter (500 aa).

The Cytoplasmic segment spans residues 1 to 37; that stretch reads MLKRKKVKPITLRDVTIIDDGKLRKAITAASLGNAME. The helical transmembrane segment at 38 to 58 threads the bilayer; it reads WFDFGVYGFVAYALGKVFFPG. Residues 59–65 lie on the Periplasmic side of the membrane; sequence ADPSVQM. Residues 66–86 traverse the membrane as a helical segment; that stretch reads VAALATFSVPFLIRPLGGLFF. The Cytoplasmic portion of the chain corresponds to 87-97; the sequence is GMLGDKYGRQK. Residues 98-118 form a helical membrane-spanning segment; that stretch reads ILAITIVIMSISTFCIGLIPS. Topologically, residues 119–121 are periplasmic; that stretch reads YDT. Residues 122-142 form a helical membrane-spanning segment; sequence IGIWAPILLLICKMAQGFSVG. Over 143–169 the chain is Cytoplasmic; the sequence is GEYTGASIFVAEYSPDRKRGFMGSWLD. Residues 170–190 traverse the membrane as a helical segment; that stretch reads FGSIAGFVLGAGVVVLISTIV. Over 191–194 the chain is Periplasmic; that stretch reads GEAN. The chain crosses the membrane as a helical span at residues 195–215; sequence FLDWGWRIPFFIALPLGIIGL. Over 216–260 the chain is Cytoplasmic; that stretch reads YLRHALEETPAFQQHVDKLEQGDREGLQDGPKVSFKEIATKYWRS. Residues 261-281 traverse the membrane as a helical segment; sequence LLTCIGLVIATNVTYYMLLTY. Residues 282 to 297 lie on the Periplasmic side of the membrane; that stretch reads MPSYLSHNLHYSEDHG. The chain crosses the membrane as a helical span at residues 298 to 318; it reads VLIIIAIMIGMLFVQPVMGLL. Over 319-325 the chain is Cytoplasmic; the sequence is SDRFGRR. The chain crosses the membrane as a helical span at residues 326-346; the sequence is PFVLLGSVALFVLAIPAFILI. Over 347–350 the chain is Periplasmic; sequence NSNV. The helical transmembrane segment at 351–371 threads the bilayer; it reads IGLIFAGLLMLAVILNCFTGV. At 372–390 the chain is on the cytoplasmic side; it reads MASTLPAMFPTHIRYSALA. Residues 391–411 form a helical membrane-spanning segment; that stretch reads AAFNISVLVAGLTPTLAAWLV. At 412–416 the chain is on the periplasmic side; that stretch reads ESSQN. Residues 417–437 form a helical membrane-spanning segment; it reads LMMPAYYLMVVAVVGLITGVT. The Cytoplasmic portion of the chain corresponds to 438–500; it reads MKETANRPLK…LVQQHPRIDE (63 aa). Residues 453-498 are a coiled coil; the sequence is ASDIQEAKEILVEHYDNIEQKIDDIDHEIADLQAKRTRLVQQHPRI.

It belongs to the major facilitator superfamily. Metabolite:H+ Symporter (MHS) family (TC 2.A.1.6) family.

Its subcellular location is the cell inner membrane. Its function is as follows. Proton symporter that senses osmotic shifts and responds by importing osmolytes such as proline, glycine betaine, stachydrine, pipecolic acid, ectoine and taurine. It is both an osmosensor and an osmoregulator which is available to participate early in the bacterial osmoregulatory response. The protein is Proline/betaine transporter (proP) of Escherichia coli O157:H7.